Here is a 136-residue protein sequence, read N- to C-terminus: Transmembrane protein 203 (136 aa).

The next 4 helical transmembrane spans lie at 14–34, 50–72, 81–101, and 112–132; these read FAQL…VLLA, FIPF…VRLF, VLRL…EMLL, and LWFG…MIRA.

The protein resides in the endoplasmic reticulum membrane. It is found in the endoplasmic reticulum-Golgi intermediate compartment. Its function is as follows. Involved in the regulation of cellular calcium homeotasis. May act as a regulator of STING-mediated inflammatory signaling in macrophages. In Xenopus tropicalis (Western clawed frog), this protein is Transmembrane protein 203 (tmem203).